The sequence spans 118 residues: Large ribosomal subunit protein uL18 (118 aa).

The protein belongs to the universal ribosomal protein uL18 family. In terms of assembly, part of the 50S ribosomal subunit; part of the 5S rRNA/L5/L18/L25 subcomplex. Contacts the 5S and 23S rRNAs.

Its function is as follows. This is one of the proteins that bind and probably mediate the attachment of the 5S RNA into the large ribosomal subunit, where it forms part of the central protuberance. The protein is Large ribosomal subunit protein uL18 of Helicobacter hepaticus (strain ATCC 51449 / 3B1).